Here is a 119-residue protein sequence, read N- to C-terminus: Basic phospholipase A2 (119 aa).

Disulfide bonds link Cys11–Cys71, Cys27–Cys118, Cys29–Cys45, Cys44–Cys99, Cys51–Cys92, Cys60–Cys85, and Cys78–Cys90. Positions 28, 30, and 32 each coordinate Ca(2+). His48 is an active-site residue. Asp49 provides a ligand contact to Ca(2+). Residue Asp93 is part of the active site.

The protein belongs to the phospholipase A2 family. Group I subfamily. D49 sub-subfamily. Ca(2+) serves as cofactor. As to expression, expressed by the venom gland.

The protein localises to the secreted. It carries out the reaction a 1,2-diacyl-sn-glycero-3-phosphocholine + H2O = a 1-acyl-sn-glycero-3-phosphocholine + a fatty acid + H(+). Snake venom phospholipase A2 (PLA2) that has several activities. It is myotoxic, has weak anticoagulant activity and inhibits neuromuscular transmission by blocking acetylcholine release from the nerve termini. PLA2 catalyzes the calcium-dependent hydrolysis of the 2-acyl groups in 3-sn-phosphoglycerides. In Hydrophis schistosus (Beaked sea snake), this protein is Basic phospholipase A2.